The primary structure comprises 307 residues: Zygote arrest protein 2.L (307 aa).

The disordered stretch occupies residues 138 to 200 (LPQGGRLPKK…EEPGNEEQTK (63 aa)). Residues 156-186 (LKERAPSPEDKEREKVSEKEPDTKDELEKRP) are compositionally biased toward basic and acidic residues. The 3CxxC-type zinc finger occupies 208-293 (QKYGYFHCKD…QELCGRCKNK (86 aa)).

This sequence belongs to the ZAR1 family. In terms of tissue distribution, expressed in oocytes.

Its subcellular location is the cytoplasm. The protein localises to the cytoplasmic ribonucleoprotein granule. Functionally, mRNA-binding protein required for maternal mRNA storage, translation and degradation during oocyte maturation. Probably promotes formation of some phase-separated membraneless compartment that stores maternal mRNAs in oocytes: acts by undergoing liquid-liquid phase separation upon binding to maternal mRNAs. Binds to the 3'-UTR of maternal mRNAs, inhibiting their translation. In Xenopus laevis (African clawed frog), this protein is Zygote arrest protein 2.L (zar2.L).